The sequence spans 325 residues: ATP phosphoribosyltransferase (325 aa).

The protein belongs to the ATP phosphoribosyltransferase family. Long subfamily. Mg(2+) serves as cofactor.

The protein resides in the cytoplasm. The enzyme catalyses 1-(5-phospho-beta-D-ribosyl)-ATP + diphosphate = 5-phospho-alpha-D-ribose 1-diphosphate + ATP. The protein operates within amino-acid biosynthesis; L-histidine biosynthesis; L-histidine from 5-phospho-alpha-D-ribose 1-diphosphate: step 1/9. Its activity is regulated as follows. Feedback inhibited by histidine. In terms of biological role, catalyzes the condensation of ATP and 5-phosphoribose 1-diphosphate to form N'-(5'-phosphoribosyl)-ATP (PR-ATP). Has a crucial role in the pathway because the rate of histidine biosynthesis seems to be controlled primarily by regulation of HisG enzymatic activity. This is ATP phosphoribosyltransferase from Bradyrhizobium sp. (strain ORS 278).